A 340-amino-acid polypeptide reads, in one-letter code: tRNA N6-adenosine threonylcarbamoyltransferase (340 aa).

Residues histidine 111 and histidine 115 each contribute to the Fe cation site. Residues 134–138 (LVSGG), aspartate 167, glycine 180, and asparagine 276 contribute to the substrate site. Aspartate 304 is a Fe cation binding site.

It belongs to the KAE1 / TsaD family. The cofactor is Fe(2+).

The protein resides in the cytoplasm. The enzyme catalyses L-threonylcarbamoyladenylate + adenosine(37) in tRNA = N(6)-L-threonylcarbamoyladenosine(37) in tRNA + AMP + H(+). Required for the formation of a threonylcarbamoyl group on adenosine at position 37 (t(6)A37) in tRNAs that read codons beginning with adenine. Is involved in the transfer of the threonylcarbamoyl moiety of threonylcarbamoyl-AMP (TC-AMP) to the N6 group of A37, together with TsaE and TsaB. TsaD likely plays a direct catalytic role in this reaction. This Helicobacter pylori (strain G27) protein is tRNA N6-adenosine threonylcarbamoyltransferase.